The following is a 229-amino-acid chain: UPF0758 protein MA_1979 (229 aa).

One can recognise an MPN domain in the interval 106–228; the sequence is KICSPKDVYA…YVSLKDEGFV (123 aa). Zn(2+) contacts are provided by His177, His179, and Asp190. Residues 177 to 190 carry the JAMM motif motif; that stretch reads HNHPSGDPSPSRED.

Belongs to the UPF0758 family.

The protein is UPF0758 protein MA_1979 of Methanosarcina acetivorans (strain ATCC 35395 / DSM 2834 / JCM 12185 / C2A).